A 188-amino-acid polypeptide reads, in one-letter code: Molybdopterin synthase catalytic subunit (188 aa).

Residues 1-14 are compositionally biased toward low complexity; that stretch reads MTTQPPQDQTSTTP. Positions 1 to 23 are disordered; sequence MTTQPPQDQTSTTPSLPPHLDPT. Substrate is bound by residues 134–135, K150, and 157–159; these read HR and KRE.

Belongs to the MoaE family. MOCS2B subfamily. As to quaternary structure, heterotetramer; composed of 2 small (MOCS2A) and 2 large (MOCS2B) subunits.

It localises to the cytoplasm. It carries out the reaction 2 [molybdopterin-synthase sulfur-carrier protein]-C-terminal-Gly-aminoethanethioate + cyclic pyranopterin phosphate + H2O = molybdopterin + 2 [molybdopterin-synthase sulfur-carrier protein]-C-terminal Gly-Gly + 2 H(+). Its pathway is cofactor biosynthesis; molybdopterin biosynthesis. Its function is as follows. Catalytic subunit of the molybdopterin synthase complex, a complex that catalyzes the conversion of precursor Z into molybdopterin. Acts by mediating the incorporation of 2 sulfur atoms from thiocarboxylated MOCS2A into precursor Z to generate a dithiolene group. This Neosartorya fischeri (strain ATCC 1020 / DSM 3700 / CBS 544.65 / FGSC A1164 / JCM 1740 / NRRL 181 / WB 181) (Aspergillus fischerianus) protein is Molybdopterin synthase catalytic subunit.